Reading from the N-terminus, the 388-residue chain is Ribonucleoside-diphosphate reductase subunit beta (388 aa).

Residues aspartate 84, glutamate 115, and histidine 118 each contribute to the Fe cation site. Tyrosine 122 is a catalytic residue. Fe cation is bound by residues glutamate 212, glutamate 247, and histidine 250.

This sequence belongs to the ribonucleoside diphosphate reductase small chain family. As to quaternary structure, heterodimer of a large and a small subunit. Requires Fe cation as cofactor.

The catalysed reaction is a 2'-deoxyribonucleoside 5'-diphosphate + [thioredoxin]-disulfide + H2O = a ribonucleoside 5'-diphosphate + [thioredoxin]-dithiol. In terms of biological role, provides the precursors necessary for DNA synthesis. Catalyzes the biosynthesis of deoxyribonucleotides from the corresponding ribonucleotides. The protein is Ribonucleoside-diphosphate reductase subunit beta (NRDB) of Escherichia coli (Bacteriophage T4).